The chain runs to 357 residues: Peptide chain release factor 1 (357 aa).

The residue at position 234 (glutamine 234) is an N5-methylglutamine.

This sequence belongs to the prokaryotic/mitochondrial release factor family. In terms of processing, methylated by PrmC. Methylation increases the termination efficiency of RF1.

Its subcellular location is the cytoplasm. Functionally, peptide chain release factor 1 directs the termination of translation in response to the peptide chain termination codons UAG and UAA. In Lactococcus lactis subsp. lactis (strain IL1403) (Streptococcus lactis), this protein is Peptide chain release factor 1 (prfA).